Reading from the N-terminus, the 89-residue chain is Small ribosomal subunit protein uS15 (89 aa).

This sequence belongs to the universal ribosomal protein uS15 family. Part of the 30S ribosomal subunit. Forms a bridge to the 50S subunit in the 70S ribosome, contacting the 23S rRNA.

Its function is as follows. One of the primary rRNA binding proteins, it binds directly to 16S rRNA where it helps nucleate assembly of the platform of the 30S subunit by binding and bridging several RNA helices of the 16S rRNA. Forms an intersubunit bridge (bridge B4) with the 23S rRNA of the 50S subunit in the ribosome. This is Small ribosomal subunit protein uS15 from Desulfotalea psychrophila (strain LSv54 / DSM 12343).